We begin with the raw amino-acid sequence, 346 residues long: MGENLPLLLSAALGKKVTRPPVWMMRQAGRYMKIYRDLRERYPSFRERSENPELSYEISMQPFHAFKPDGVILFSDILTPLPGMGINFEIIESKGPIIEDPIRTLSQIESLKELNPSESLSFVGQVLSSLKKDVNNEATVLGFVGAPWTLAAYVVEGKSSKNYSLIKSMAFKEPDLLHKLLDHFAKSIGEYLKFQIKSGAQVVQIFDSWAGQLSPQDYDIFAGPYQKKVVDIVKEEYPDTPVILYISGSAGVIERMAKTGVDIISLDWTVDIEEACKRIPDEIGIQGNVDPGILFGNKESIKERIDDTFNKIKDRKYILNLGHGILPGTPEENAQTFFEHGKKLTY.

Residues 26 to 30, Asp76, Tyr153, Ser208, and His323 contribute to the substrate site; that span reads RQAGR.

Belongs to the uroporphyrinogen decarboxylase family. As to quaternary structure, homodimer.

It is found in the cytoplasm. It catalyses the reaction uroporphyrinogen III + 4 H(+) = coproporphyrinogen III + 4 CO2. It participates in porphyrin-containing compound metabolism; protoporphyrin-IX biosynthesis; coproporphyrinogen-III from 5-aminolevulinate: step 4/4. Its function is as follows. Catalyzes the decarboxylation of four acetate groups of uroporphyrinogen-III to yield coproporphyrinogen-III. In Prochlorococcus marinus (strain MIT 9312), this protein is Uroporphyrinogen decarboxylase.